The following is an 808-amino-acid chain: MGDILAYEADLLGLVKEFLNFGEFQETLETFTKECKTKGKQLPKTSGLALRESKTLLIQKDLITAFEDGDIKEFFALWQEHIPVETQNTNPVAQKLEFYLQIHFAIFPLKHNQGRIDRTDCEERISHFKTYLETSGAALSQTTEFLPFYALPFVPHPAAHPSFKEIFQESWEAELRMRLEKFLSVILKATSTPRLITLYKESLHNNQELLQQLQQQLMETEHKARTYKKCFNRMQSDYHNLIGVTADLVDSLEATINGKLITPEYLQSVCTRLFSTQMKQSSAQSIDFTRPGTASSMLRASIAPLKQQEVPLFPSLDYEKLKKDLVFGNDRLKALILQALRWRLTRSQPGEQRNTVLQAYISNDLLDCHHNEQKNVLMLLRSPSEVVRQYTALLIDVFSSLAYGRVYISQNPRLLHSLVETWKAEEKESVIRETVLGILQKLSLRRSMQSAMIKDDLIFWLVQELEDTDHLSDYALQYTIALFMNLCLRSAGRKMCSRDADHVLKVLSDLLGHENHEIRSYVNGALYSILAVPSIREEARSMGMEEILRWYIREGNTDMNCHIEFIIKQLNSEDKFDESIESDDEEEEKDDEEDEDALEADLDKDEIIYAQSGELAGEKLLTTDYLGIMTNSFKVKKRMFGGVLQSADEPLQRPVTPSTHRVMNTVRKTSGPPSPPTNTFKTSQANMSVVSSRPPTRSGSRASTSDYCVTSDSIDSEASRLFSPSSQADQRGASSPRILDLGMEKHNGQNSSKAWLPRSPEVLSATSRKARTPTIAPQFSQSGPQQTSYSSSAGSSTRSRQSTQSYRK.

Residues 7–39 enclose the LisH domain; that stretch reads YEADLLGLVKEFLNFGEFQETLETFTKECKTKG. Positions 196-230 form a coiled coil; it reads ITLYKESLHNNQELLQQLQQQLMETEHKARTYKKC. Disordered stretches follow at residues 576–599, 650–709, and 742–808; these read FDESIESDDEEEEKDDEEDEDALE, PLQR…DYCV, and GMEK…SYRK. Residues 579–599 are compositionally biased toward acidic residues; sequence SIESDDEEEEKDDEEDEDALE. Composition is skewed to polar residues over residues 655–668, 677–709, and 775–784; these read VTPSTHRVMNTVRK, TNTFKTSQANMSVVSSRPPTRSGSRASTSDYCV, and IAPQFSQSGP. The segment covering 785-808 has biased composition (low complexity); that stretch reads QQTSYSSSAGSSTRSRQSTQSYRK.

It is found in the cytoplasm. The protein resides in the cytoskeleton. It localises to the cilium basal body. The protein localises to the cell projection. Its subcellular location is the cilium. It is found in the microtubule organizing center. The protein resides in the centrosome. It localises to the centriole. Its function is as follows. Involved in ciliogenesis. It is required for appropriate acetylation and polyglutamylation of ciliary microtubules, and regulation of cilium length. Acts as a positive regulator of hedgehog (Hh)signaling. This chain is LisH domain-containing protein ARMC9 (armc9), found in Xenopus tropicalis (Western clawed frog).